The following is a 283-amino-acid chain: 4-diphosphocytidyl-2-C-methyl-D-erythritol kinase (283 aa).

Residue K10 is part of the active site. Position 99-109 (99-109 (PMGGGLGGGSS)) interacts with ATP. The active site involves D141.

The protein belongs to the GHMP kinase family. IspE subfamily. As to quaternary structure, homodimer.

It catalyses the reaction 4-CDP-2-C-methyl-D-erythritol + ATP = 4-CDP-2-C-methyl-D-erythritol 2-phosphate + ADP + H(+). Its pathway is isoprenoid biosynthesis; isopentenyl diphosphate biosynthesis via DXP pathway; isopentenyl diphosphate from 1-deoxy-D-xylulose 5-phosphate: step 3/6. Its function is as follows. Catalyzes the phosphorylation of the position 2 hydroxy group of 4-diphosphocytidyl-2C-methyl-D-erythritol. In Escherichia coli O81 (strain ED1a), this protein is 4-diphosphocytidyl-2-C-methyl-D-erythritol kinase.